The chain runs to 333 residues: MSATLQKLAELTGSSLIGDSTLTICSVANLNHATPRDLVFCEDEKYLGDAFASPAAAIVVGEFAASAHDAPKPLLISTQPRLAFAKAAKVLRSHKKRSGGIVHPTAVVPPTVVFGAEVVVGAYVVLGEHVHIGDRVCIGAGVCIGSDVKIGTDCEIHSRVTIYHGTHIGNHVIIHAGAVLGSDGFGYVRDKLTGRYHQMPQIGHLIVGDHVDIGANVTIDRGGLEDTVIGAGTKLDNLVHIGHNVRIGENVVIAAQTGISGSCTIGAGSIIGGQVGMGDHATLEEGTILGGQSGILSEKIFREKGPCFGTPAKPLKQYLREQAALSRLSRRSE.

Catalysis depends on histidine 243, which acts as the Proton acceptor.

It belongs to the transferase hexapeptide repeat family. LpxD subfamily. As to quaternary structure, homotrimer.

The catalysed reaction is a UDP-3-O-[(3R)-3-hydroxyacyl]-alpha-D-glucosamine + a (3R)-hydroxyacyl-[ACP] = a UDP-2-N,3-O-bis[(3R)-3-hydroxyacyl]-alpha-D-glucosamine + holo-[ACP] + H(+). It participates in bacterial outer membrane biogenesis; LPS lipid A biosynthesis. Its function is as follows. Catalyzes the N-acylation of UDP-3-O-acylglucosamine using 3-hydroxyacyl-ACP as the acyl donor. Is involved in the biosynthesis of lipid A, a phosphorylated glycolipid that anchors the lipopolysaccharide to the outer membrane of the cell. The polypeptide is UDP-3-O-acylglucosamine N-acyltransferase 2 (Koribacter versatilis (strain Ellin345)).